Consider the following 144-residue polypeptide: Large ribosomal subunit protein uL13 (144 aa).

Belongs to the universal ribosomal protein uL13 family. As to quaternary structure, part of the 50S ribosomal subunit.

This protein is one of the early assembly proteins of the 50S ribosomal subunit, although it is not seen to bind rRNA by itself. It is important during the early stages of 50S assembly. In Ruminiclostridium cellulolyticum (strain ATCC 35319 / DSM 5812 / JCM 6584 / H10) (Clostridium cellulolyticum), this protein is Large ribosomal subunit protein uL13.